A 205-amino-acid polypeptide reads, in one-letter code: Meiotic nuclear division protein 1 homolog (205 aa).

Positions 79-147 (LHARKRKLET…CADLEKYKEC (69 aa)) form a coiled coil.

The protein belongs to the MND1 family.

It localises to the nucleus. In terms of biological role, required for proper homologous chromosome pairing and efficient cross-over and intragenic recombination during meiosis. Stimulates both dmc1- and rad51-mediated homologous strand assimilation, which is required for the resolution of meiotic double-strand breaks. The sequence is that of Meiotic nuclear division protein 1 homolog from Xenopus laevis (African clawed frog).